Reading from the N-terminus, the 353-residue chain is Nicotinate-nucleotide--dimethylbenzimidazole phosphoribosyltransferase (353 aa).

Glu-318 (proton acceptor) is an active-site residue.

This sequence belongs to the CobT family.

It carries out the reaction 5,6-dimethylbenzimidazole + nicotinate beta-D-ribonucleotide = alpha-ribazole 5'-phosphate + nicotinate + H(+). It functions in the pathway nucleoside biosynthesis; alpha-ribazole biosynthesis; alpha-ribazole from 5,6-dimethylbenzimidazole: step 1/2. Catalyzes the synthesis of alpha-ribazole-5'-phosphate from nicotinate mononucleotide (NAMN) and 5,6-dimethylbenzimidazole (DMB). In Roseiflexus castenholzii (strain DSM 13941 / HLO8), this protein is Nicotinate-nucleotide--dimethylbenzimidazole phosphoribosyltransferase.